The sequence spans 260 residues: Cell division protein DivIB (260 aa).

Topologically, residues 1–25 are cytoplasmic; that stretch reads MGAQDQNGKNHGGLFRDFQNRNVKK. Residues 26 to 46 traverse the membrane as a helical segment; the sequence is MWPLVMPITIILLVMIFMISS. Residues 47–260 are Extracellular-facing; sequence YSRVKKVTVS…STKTTSVQGY (214 aa). The region spanning 48–119 is the POTRA domain; that stretch reads SRVKKVTVSG…NQVKIKVEEY (72 aa).

It belongs to the FtsQ/DivIB family. DivIB subfamily.

Its subcellular location is the cell membrane. Its function is as follows. Cell division protein that may be involved in stabilizing or promoting the assembly of the division complex. The protein is Cell division protein DivIB of Lentilactobacillus buchneri (strain NRRL B-30929) (Lactobacillus buchneri).